A 288-amino-acid chain; its full sequence is Polyamine aminopropyltransferase (288 aa).

The PABS domain maps to 9–242 (SEWLDEYHQG…GLWSWTFASM (234 aa)). Glutamine 36 provides a ligand contact to S-methyl-5'-thioadenosine. Residues histidine 67 and aspartate 91 each contribute to the spermidine site. Residues glutamate 111 and 143–144 (NG) contribute to the S-methyl-5'-thioadenosine site. Catalysis depends on aspartate 162, which acts as the Proton acceptor. Proline 169 contributes to the S-methyl-5'-thioadenosine binding site.

It belongs to the spermidine/spermine synthase family. As to quaternary structure, homodimer or homotetramer.

The protein localises to the cytoplasm. The enzyme catalyses S-adenosyl 3-(methylsulfanyl)propylamine + putrescine = S-methyl-5'-thioadenosine + spermidine + H(+). It participates in amine and polyamine biosynthesis; spermidine biosynthesis; spermidine from putrescine: step 1/1. In terms of biological role, catalyzes the irreversible transfer of a propylamine group from the amino donor S-adenosylmethioninamine (decarboxy-AdoMet) to putrescine (1,4-diaminobutane) to yield spermidine. This is Polyamine aminopropyltransferase from Prochlorococcus marinus (strain NATL2A).